The primary structure comprises 465 residues: E3 ubiquitin-protein ligase ORTHRUS-LIKE 1 (465 aa).

Residues 31 to 69 are disordered; that stretch reads TSLSSPLDRSGDVDPLPVSDESGGSKADESMTDADETKK. The RING-type zinc finger occupies 109 to 148; the sequence is CSLCNQLPDRPVTILCGHNFCLKCFDKWIDQGNQICATCR. The region spanning 233 to 374 is the YDG domain; it reads VRNQGVLVGE…FKVCRYLFVR (142 aa). A helical membrane pass occupies residues 442-462; sequence MAMTCLLLFVLIILVGSSSIL.

The protein localises to the nucleus. The protein resides in the membrane. The enzyme catalyses S-ubiquitinyl-[E2 ubiquitin-conjugating enzyme]-L-cysteine + [acceptor protein]-L-lysine = [E2 ubiquitin-conjugating enzyme]-L-cysteine + N(6)-ubiquitinyl-[acceptor protein]-L-lysine.. It participates in protein modification; protein ubiquitination. Its function is as follows. E3 ubiquitin-protein ligase. May participate in methylation-dependent transcriptional regulation. Mediates ubiquitination with the E2 ubiquitin-conjugating enzyme UBC11. This chain is E3 ubiquitin-protein ligase ORTHRUS-LIKE 1 (ORTHL), found in Arabidopsis thaliana (Mouse-ear cress).